A 114-amino-acid chain; its full sequence is Small ribosomal subunit protein uS15 (114 aa).

This sequence belongs to the universal ribosomal protein uS15 family.

This Musca domestica (House fly) protein is Small ribosomal subunit protein uS15 (RpS13).